Here is a 398-residue protein sequence, read N- to C-terminus: MNWHLPLFLLASVTLPSICSHFNPLSLEELGSNTGIQVFNQIVKSRPHDNIVISPHGIASVLGMLQLGADGRTKKQLAMVMRYGVNGVGKILKKINKAIVSKKNKDIVTVANAVFVKNASEIEVPFVTRNKDVFQCEVRNVNFEDPASACDSINAWVKNETRDMIDNLLSPDLIDGVLTRLVLVNAVYFKGLWKSRFQPENTKKRTFVAADGKSYQVPMLAQLSVFRCGSTSAPNDLWYNFIELPYHGESISMLIALPTESSTPLSAIIPHISTKTIDSWMSIMVPKRVQVILPKFTAVAQTDLKEPLKVLGITDMFDSSKANFAKITTGSENLHVSHILQKAKIEVSEDGTKASAATTAILIARSSPPWFIVDRPFLFFIRHNPTGAVLFMGQINKP.

Positions 1–19 (MNWHLPLFLLASVTLPSIC) are cleaved as a signal peptide. N-linked (GlcNAc...) asparagine glycans are attached at residues Asn118 and Asn159.

The protein belongs to the serpin family.

The protein resides in the secreted. Its subcellular location is the extracellular space. Its function is as follows. Serine protease inhibitor with activity toward thrombin, trypsin, and urokinase. Promotes neurite extension by inhibiting thrombin. Binds heparin. This is Glia-derived nexin (SERPINE2) from Homo sapiens (Human).